We begin with the raw amino-acid sequence, 126 residues long: Holo-[acyl-carrier-protein] synthase (126 aa).

Mg(2+) contacts are provided by D9 and E58.

It belongs to the P-Pant transferase superfamily. AcpS family. Requires Mg(2+) as cofactor.

The protein localises to the cytoplasm. It catalyses the reaction apo-[ACP] + CoA = holo-[ACP] + adenosine 3',5'-bisphosphate + H(+). In terms of biological role, transfers the 4'-phosphopantetheine moiety from coenzyme A to a Ser of acyl-carrier-protein. The polypeptide is Holo-[acyl-carrier-protein] synthase (Escherichia coli (strain K12 / MC4100 / BW2952)).